A 398-amino-acid chain; its full sequence is MRKRTEPVTLEHERCAASGSSSSGSAAAALDADCSLKQNLRLAGKGTAEPHSASDAGMKRALGRRKSLWFRLRKILLCVLGFYIAIPFLVKLCPGIQAKLIFLNFVRVPYFIDLKKPQDQGLNHTCNYYLQPEDDVTIGVWHTIPSVWWKNAQGKDQMWYEDALASNHAIILYLHGNAGTRGGDHRVELYKVLSSLGYHVVTFDYRGWGDSVGTPSERGMTYDALHVFDWIKARSGDNPVYIWGHSLGTGVATNLVRRLCERETPPDALILESPFTNIREEAKSHPFSVIYRYFPGFDWFFLDPITSSGIKFANDENMKHISCPLLILHAEDDPVVPFHLGRKLYNIAAPSRSFRDFKVQFIPFHSDLGYRHKYIYKSPELPRILREFLGKSEPERQH.

Residues 1 to 15 (MRKRTEPVTLEHERC) show a composition bias toward basic and acidic residues. The interval 1–24 (MRKRTEPVTLEHERCAASGSSSSG) is disordered. At 1–74 (MRKRTEPVTL…RKSLWFRLRK (74 aa)) the chain is on the cytoplasmic side. Residues 75 to 95 (ILLCVLGFYIAIPFLVKLCPG) traverse the membrane as a helical segment. The Extracellular portion of the chain corresponds to 96 to 398 (IQAKLIFLNF…LGKSEPERQH (303 aa)). The N-linked (GlcNAc...) asparagine glycan is linked to N123. The active-site Nucleophile is the S246. Active-site charge relay system residues include D333 and H372.

This sequence belongs to the serine esterase family. Post-translationally, glycosylated.

The protein resides in the endoplasmic reticulum membrane. It localises to the mitochondrion. The catalysed reaction is 1-(9Z-octadecenoyl)-sn-glycero-3-phospho-L-serine + H2O = sn-glycero-3-phospho-L-serine + (9Z)-octadecenoate + H(+). The enzyme catalyses 1-(9Z-octadecenoyl)-sn-glycero-3-phospho-(1'-sn-glycerol) + H2O = sn-glycero-3-phospho-(1'-sn-glycerol) + (9Z)-octadecenoate + H(+). It carries out the reaction 1-(9Z-octadecenoyl)-sn-glycero-3-phospho-(1D-myo-inositol) + H2O = sn-glycero-3-phospho-1D-myo-inositol + (9Z)-octadecenoate + H(+). It catalyses the reaction 1-(9Z-octadecenoyl)-sn-glycero-3-phosphoethanolamine + H2O = sn-glycero-3-phosphoethanolamine + (9Z)-octadecenoate + H(+). The catalysed reaction is 1-(9Z-octadecenoyl)-sn-glycero-3-phosphocholine + H2O = 1-(9Z-octadecenoyl)-sn-glycerol + phosphocholine + H(+). The enzyme catalyses 2-(9Z-octadecenoyl)-glycerol + H2O = glycerol + (9Z)-octadecenoate + H(+). It carries out the reaction 1-hexadecanoyl-sn-glycero-3-phospho-L-serine + H2O = sn-glycero-3-phospho-L-serine + hexadecanoate + H(+). It catalyses the reaction 2-(5Z,8Z,11Z,14Z-eicosatetraenoyl)-glycerol + H2O = glycerol + (5Z,8Z,11Z,14Z)-eicosatetraenoate + H(+). The catalysed reaction is Hydrolyzes glycerol monoesters of long-chain fatty acids.. The enzyme catalyses 1-decanoylglycerol + H2O = decanoate + glycerol + H(+). It carries out the reaction 1-dodecanoylglycerol + H2O = dodecanoate + glycerol + H(+). It catalyses the reaction 1-tetradecanoylglycerol + H2O = tetradecanoate + glycerol + H(+). The catalysed reaction is 2-hexadecanoylglycerol + H2O = glycerol + hexadecanoate + H(+). The enzyme catalyses 1-(9Z-octadecenoyl)-glycerol + H2O = glycerol + (9Z)-octadecenoate + H(+). It carries out the reaction 2-(9Z,12Z-octadecadienoyl)-glycerol + H2O = (9Z,12Z)-octadecadienoate + glycerol + H(+). It catalyses the reaction 1-(5Z,8Z,11Z,14Z-eicosatetraenoyl)-glycerol + H2O = glycerol + (5Z,8Z,11Z,14Z)-eicosatetraenoate + H(+). The catalysed reaction is 1-(9Z,12Z-octadecadienoyl)-glycerol + H2O = (9Z,12Z)-octadecadienoate + glycerol + H(+). The enzyme catalyses 1-hexadecanoylglycerol + H2O = glycerol + hexadecanoate + H(+). It carries out the reaction 1-octadecanoylglycerol + H2O = octadecanoate + glycerol + H(+). It catalyses the reaction 1-octadecanoyl-2-(9,10-epoxyoctadecanoyl)-sn-glycero-3-phospho-L-serine + H2O = 9,10-epoxyoctadecanoate + 1-octadecanoyl-sn-glycero-3-phosphoserine + H(+). The catalysed reaction is 1-octadecanoyl-2-(10-hydroxyoctadecanoyl)-sn-glycero-3-phospho-L-serine + H2O = 1-octadecanoyl-sn-glycero-3-phosphoserine + 10-hydroxyoctadecanoate + H(+). The enzyme catalyses 1-hexadecanoyl-2-(10-hydroxyoctadecanoyl)-sn-glycero-3-phospho-L-serine + H2O = 10-hydroxyoctadecanoate + 1-hexadecanoyl-sn-glycero-3-phospho-L-serine + H(+). Selectively inhibited by DO264 (N-3-pyridyl-N'-(1-[3-chloro-4-{2-chloro-4-(trifluoromethoxy)phenoxy}pyridine-2-yl]piperidin-4-yl)thiourea). Lysophosphatidylserine (LPS) lipase that mediates the hydrolysis of lysophosphatidylserine, a class of signaling lipids that regulates immunological and neurological processes. Represents a major lysophosphatidylserine lipase in the brain, thereby playing a key role in the central nervous system. Also able to hydrolyze oxidized phosphatidylserine; oxidized phosphatidylserine is produced in response to severe inflammatory stress and constitutes a proapoptotic 'eat me' signal. Also has monoacylglycerol (MAG) lipase activity: hydrolyzes 2-arachidonoylglycerol (2-AG), thereby acting as a regulator of endocannabinoid signaling pathways. Has a strong preference for very-long-chain lipid substrates; substrate specificity is likely due to improved catalysis and not improved substrate binding. The protein is Lysophosphatidylserine lipase ABHD12 of Mus musculus (Mouse).